A 565-amino-acid chain; its full sequence is Urocanate hydratase (565 aa).

NAD(+) contacts are provided by residues 58-59 (GG), Gln-136, 182-184 (GMG), Glu-202, Arg-207, 245-246 (NA), 266-270 (QTSAH), 276-277 (YL), and Tyr-325. Residue Cys-413 is part of the active site. Gly-495 serves as a coordination point for NAD(+).

This sequence belongs to the urocanase family. It depends on NAD(+) as a cofactor.

The protein resides in the cytoplasm. It carries out the reaction 4-imidazolone-5-propanoate = trans-urocanate + H2O. It participates in amino-acid degradation; L-histidine degradation into L-glutamate; N-formimidoyl-L-glutamate from L-histidine: step 2/3. In terms of biological role, catalyzes the conversion of urocanate to 4-imidazolone-5-propionate. The polypeptide is Urocanate hydratase (Vibrio vulnificus (strain YJ016)).